The sequence spans 876 residues: Alanine--tRNA ligase (876 aa).

N6-acetyllysine is present on Lys-74. Residues His-564, His-568, Cys-666, and His-670 each contribute to the Zn(2+) site.

Belongs to the class-II aminoacyl-tRNA synthetase family. In terms of assembly, homotetramer. Zn(2+) serves as cofactor.

It is found in the cytoplasm. It carries out the reaction tRNA(Ala) + L-alanine + ATP = L-alanyl-tRNA(Ala) + AMP + diphosphate. Functionally, catalyzes the attachment of alanine to tRNA(Ala) in a two-step reaction: alanine is first activated by ATP to form Ala-AMP and then transferred to the acceptor end of tRNA(Ala). Also edits incorrectly charged Ser-tRNA(Ala) and Gly-tRNA(Ala) via its editing domain. The polypeptide is Alanine--tRNA ligase (Shigella flexneri serotype 5b (strain 8401)).